The sequence spans 697 residues: Protein no-on-transient A (697 aa).

Positions 1–29 are enriched in polar residues; it reads MENSVKMDNSGNSTPLPQRQRRANNQPNK. The tract at residues 1-253 is disordered; sequence MENSVKMDNS…GGNNSQRGDD (253 aa). The segment covering 61 to 80 has biased composition (gly residues); the sequence is NGGGGSVVGGGGGGGGGGGQ. Low complexity-rich tracts occupy residues 102 to 118 and 139 to 191; these read RGGNQNRSNFQNQNQNQ and ANNA…QNQA. Residues 195 to 223 show a composition bias toward gly residues; the sequence is RGGGGGGGGGGGGGGGGGGGGGGGGGGGG. The segment covering 224–233 has biased composition (basic and acidic residues); sequence GRDRNPDRRG. The span at 234–246 shows a compositional bias: gly residues; that stretch reads GGGGGGQNSGGGN. 2 consecutive RRM domains span residues 285-357 and 359-445; these read NRLY…FAPN and TILR…DDND. Residues 488–586 are a coiled coil; it reads DLFKSKQDAL…DMRRRQQENT (99 aa). The span at 551-565 shows a compositional bias: basic and acidic residues; that stretch reads EMRKREEETMRRHQT. 2 disordered regions span residues 551–575 and 601–697; these read EMRKREEETMRRHQTEMQSRMVRQE and QEGF…RRRF. Residues 603–622 are compositionally biased toward gly residues; the sequence is GFGGGNGGGGGGGGGGGGVG. 2 stretches are compositionally biased toward low complexity: residues 623 to 635 and 642 to 659; these read NSNFDNFGGNSNS and GNNNSSMAGNNAGPGANN.

Required for normal vision and courtship behavior in Drosophila. This Drosophila virilis (Fruit fly) protein is Protein no-on-transient A (nonA).